The sequence spans 443 residues: Tubulin beta chain (443 aa).

GTP contacts are provided by Q11, E69, S138, G142, T143, G144, N204, and N226. Residue E69 coordinates Mg(2+).

Belongs to the tubulin family. Dimer of alpha and beta chains. A typical microtubule is a hollow water-filled tube with an outer diameter of 25 nm and an inner diameter of 15 nM. Alpha-beta heterodimers associate head-to-tail to form protofilaments running lengthwise along the microtubule wall with the beta-tubulin subunit facing the microtubule plus end conferring a structural polarity. Microtubules usually have 13 protofilaments but different protofilament numbers can be found in some organisms and specialized cells. Requires Mg(2+) as cofactor.

It localises to the cytoplasm. The protein resides in the cytoskeleton. In terms of biological role, tubulin is the major constituent of microtubules, a cylinder consisting of laterally associated linear protofilaments composed of alpha- and beta-tubulin heterodimers. Microtubules grow by the addition of GTP-tubulin dimers to the microtubule end, where a stabilizing cap forms. Below the cap, tubulin dimers are in GDP-bound state, owing to GTPase activity of alpha-tubulin. In Thalassiosira weissflogii (Marine diatom), this protein is Tubulin beta chain.